Consider the following 212-residue polypeptide: MSDTSIQQQSQLTSGDFTAAENPFALFAEWFADANESELNDPNAMALATVDPDGLPDVRMVLMKGYDTDGFVFYSHIASQKGRELAANPKAALLFHWKSLRRQVRIRGAVSAVTETEADDYFATRPKQAQIGAWASKQSQPLESRFAFEQAIAKVAARYLVGEVPRPPGWSGWRITPLRFEFWHDRPFRLHDRIEFSRDTPAQPWIKTRLYP.

Residues 59 to 64 (RMVLMK), 74 to 75 (YS), Lys-81, and Gln-103 contribute to the FMN site. Lys-64 lines the substrate pocket. The substrate site is built by Tyr-121 and Arg-125. FMN is bound by residues 138–139 (QS) and Trp-183. 189 to 191 (RLH) is a substrate binding site. Arg-193 contacts FMN.

This sequence belongs to the pyridoxamine 5'-phosphate oxidase family. Homodimer. Requires FMN as cofactor.

It carries out the reaction pyridoxamine 5'-phosphate + O2 + H2O = pyridoxal 5'-phosphate + H2O2 + NH4(+). The enzyme catalyses pyridoxine 5'-phosphate + O2 = pyridoxal 5'-phosphate + H2O2. The protein operates within cofactor metabolism; pyridoxal 5'-phosphate salvage; pyridoxal 5'-phosphate from pyridoxamine 5'-phosphate: step 1/1. It participates in cofactor metabolism; pyridoxal 5'-phosphate salvage; pyridoxal 5'-phosphate from pyridoxine 5'-phosphate: step 1/1. Functionally, catalyzes the oxidation of either pyridoxine 5'-phosphate (PNP) or pyridoxamine 5'-phosphate (PMP) into pyridoxal 5'-phosphate (PLP). The protein is Pyridoxine/pyridoxamine 5'-phosphate oxidase of Rhodopseudomonas palustris (strain BisB5).